The sequence spans 174 residues: CEN-like protein 1 (174 aa).

It belongs to the phosphatidylethanolamine-binding protein family. Expressed in vegetative axillary meristems but not in the main shoot meristem.

The protein resides in the cytoplasm. May form complexes with phosphorylated ligands by interfering with kinases and their effectors. This is CEN-like protein 1 (CET1) from Nicotiana tabacum (Common tobacco).